The following is a 353-amino-acid chain: Nicotinate-nucleotide--dimethylbenzimidazole phosphoribosyltransferase (353 aa).

The active-site Proton acceptor is the Glu320.

Belongs to the CobT family.

The catalysed reaction is 5,6-dimethylbenzimidazole + nicotinate beta-D-ribonucleotide = alpha-ribazole 5'-phosphate + nicotinate + H(+). The protein operates within nucleoside biosynthesis; alpha-ribazole biosynthesis; alpha-ribazole from 5,6-dimethylbenzimidazole: step 1/2. Catalyzes the synthesis of alpha-ribazole-5'-phosphate from nicotinate mononucleotide (NAMN) and 5,6-dimethylbenzimidazole (DMB). In Pseudoalteromonas translucida (strain TAC 125), this protein is Nicotinate-nucleotide--dimethylbenzimidazole phosphoribosyltransferase.